The following is a 430-amino-acid chain: 2-deoxy-scyllo-inosose synthase (430 aa).

NAD(+) contacts are provided by residues D42, 73 to 76 (EVHK), 105 to 109 (GVTGN), 129 to 130 (TT), 140 to 142 (SLK), and 151 to 152 (KN). The active site involves K142. Co(2+) is bound at residue E184. The active site involves E244. Co(2+) contacts are provided by H247 and H263. Residues 371 to 430 (RGGAGGGAAEPAAARTGPVPDGPEAAVPATPGPVPAGPAAAAPLPSGPAPTAPAAAGPVP) form a disordered region. Residues 379–399 (AEPAAARTGPVPDGPEAAVPA) are compositionally biased toward low complexity.

The protein belongs to the sugar phosphate cyclases superfamily. DOI synthase family. The cofactor is NAD(+). Co(2+) serves as cofactor.

The enzyme catalyses D-glucose 6-phosphate = 2-deoxy-L-scyllo-inosose + phosphate. It participates in metabolic intermediate biosynthesis; 2-deoxystreptamine biosynthesis; 2-deoxystreptamine from D-glucose 6-phosphate: step 1/4. Its pathway is antibiotic biosynthesis; neomycin biosynthesis. Catalyzes the intramolecular carbocycle formation from D-glucose-6-phosphate to 2-deoxy-scyllo-inosose (DOI). This chain is 2-deoxy-scyllo-inosose synthase (neoC), found in Streptomyces fradiae (Streptomyces roseoflavus).